A 235-amino-acid polypeptide reads, in one-letter code: 7-cyano-7-deazaguanine synthase (235 aa).

Cysteine 7–alanine 17 lines the ATP pocket. Cysteine 185, cysteine 193, cysteine 196, and cysteine 199 together coordinate Zn(2+).

It belongs to the QueC family. The cofactor is Zn(2+).

It carries out the reaction 7-carboxy-7-deazaguanine + NH4(+) + ATP = 7-cyano-7-deazaguanine + ADP + phosphate + H2O + H(+). It participates in purine metabolism; 7-cyano-7-deazaguanine biosynthesis. In terms of biological role, catalyzes the ATP-dependent conversion of 7-carboxy-7-deazaguanine (CDG) to 7-cyano-7-deazaguanine (preQ(0)). In Allorhizobium ampelinum (strain ATCC BAA-846 / DSM 112012 / S4) (Agrobacterium vitis (strain S4)), this protein is 7-cyano-7-deazaguanine synthase.